An 87-amino-acid chain; its full sequence is MRIKGVVLSYRRSKENQHTNVMIIKPLNVNSREEASKLIGRLVIWKSPSGKLLKGKIVRVHGTKGAVRARFEKGLPGQALGDYVEII.

It belongs to the eukaryotic ribosomal protein eL33 family.

This is Large ribosomal subunit protein eL33 from Pyrococcus abyssi (strain GE5 / Orsay).